The chain runs to 220 residues: MGNVQERPSETIDRERKRLVETLQADSGLLLDALVARGVLTGPEYEALDALPDAERRVRRLLLLVQSKGEAACQELLRCAQQTVRMPDPAWDWQHVGPGYRNRSYDPSCPGHWTPEAPSSGTTCPELPRASEQEEVGGPEGSEALQPRTPEEPELEAEATEGDEPDLEQEMNPEQEPEPEPEPEPEPEPEPEPEPEPEPEPEPEPEPEPDFQEEDESEDS.

Gly-2 carries N-myristoyl glycine lipidation. Residues 4-95 form the CARD domain; it reads VQERPSETID…MPDPAWDWQH (92 aa). The tract at residues 20–70 is essential for interaction with BAX; that stretch reads VETLQADSGLLLDALVARGVLTGPEYEALDALPDAERRVRRLLLLVQSKGE. The disordered stretch occupies residues 111-220; the sequence is GHWTPEAPSS…FQEEDESEDS (110 aa). Phosphothreonine; by CK2 is present on Thr-149. The span at 152–220 shows a compositional bias: acidic residues; sequence EPELEAEATE…FQEEDESEDS (69 aa).

Oligomerizes (via CARD doamin). Interacts (via CARD domain) with CASP2; inhibits CASP2 activity in a phosphorylation-dependent manner. Interacts with CASP8; decreases CASP8 activity in a mitochondria localization- and phosphorylation-dependent manner and this interaction is dissociated by calcium. Interacts with TFPT; translocates NOL3 into the nucleus and negatively regulated TFPT-induced cell death. Interacts directly (via CARD domain) with FAS and FADD (via DED domain); inhibits death-inducing signaling complex (DISC) assembly by inhibiting the increase in FAS-FADD binding induced by FAS activation. Interacts (via CARD domain) with BAX (via a C-terminal 33 residues); inhibits BAX activation and translocation and consequently cytochrome c release from mitochondria. Interacts with PPM1G; may dephosphorylate NOL3. Interacts (via CARD domain) with BBC3 (via BH3 domain); preventing the association of BBC3 with BCL2 and resulting in activation of CASP8. Interacts (via CARD domain) with BAD(via BH3 domain); preventing the association of BAD with BCL2. Interacts directly (via CARD domain) with TNFRSF1A; inhibits TNF-signaling pathway. Phosphorylation at Thr-149 is required for its antiapoptotic effect by blocking death-inducing signaling complex death-inducing signaling complex (DISC) activity through the control of interaction with CASP8. Phosphorylation at Thr-149 results in translocation to mitochondria and this translocation enables the binding to CASP8. Dephosphorylated at Thr-149 by calcineurin; doesn't inhibit the association between FADD and CASP8 and the consequent apoptosis. In terms of processing, polyubiquitinated by MDM2; promoting proteasomal-dependent degradation in response to apoptotic stimuli.

The protein resides in the cytoplasm. It localises to the mitochondrion. Its subcellular location is the sarcoplasmic reticulum. The protein localises to the membrane. Functionally, apoptosis repressor that blocks multiple modes of cell death. Inhibits extrinsic apoptotic pathways through two different ways. Firstly by interacting with FAS and FADD upon FAS activation blocking death-inducing signaling complex (DISC) assembly. Secondly by interacting with CASP8 in a mitochondria localization- and phosphorylation-dependent manner, limiting the amount of soluble CASP8 available for DISC-mediated activation. Inhibits intrinsic apoptotic pathway in response to a wide range of stresses, through its interaction with BAX resulting in BAX inactivation, preventing mitochondrial dysfunction and release of pro-apoptotic factors. Inhibits calcium-mediated cell death by functioning as a cytosolic calcium buffer, dissociating its interaction with CASP8 and maintaining calcium homeostasis. Negatively regulates oxidative stress-induced apoptosis by phosphorylation-dependent suppression of the mitochondria-mediated intrinsic pathway, by blocking CASP2 activation and BAX translocation. Negatively regulates hypoxia-induced apoptosis in part by inhibiting the release of cytochrome c from mitochondria in a caspase-independent manner. Also inhibits TNF-induced necrosis by preventing TNF-signaling pathway through TNFRSF1A interaction abrogating the recruitment of RIPK1 to complex I. Finally through its role as apoptosis repressor, promotes vascular remodeling through inhibition of apoptosis and stimulation of proliferation, in response to hypoxia. Inhibits too myoblast differentiation through caspase inhibition. The chain is Nucleolar protein 3 (Nol3) from Mus musculus (Mouse).